A 487-amino-acid chain; its full sequence is L-tartrate/succinate antiporter (487 aa).

The next 14 membrane-spanning stretches (helical) occupy residues 10 to 30 (YLAP…AGLE), 33 to 53 (TWLY…EPVP), 54 to 74 (GAVV…WLLF), 93 to 113 (WAVF…FMFG), 137 to 157 (TLFL…VTPS), 189 to 209 (IGSY…AIFL), 236 to 256 (FLGM…LAYV), 292 to 312 (LMVG…AAMV), 313 to 333 (GYSV…DIVS), 340 to 360 (VFFW…TGFI), 370 to 390 (SLSG…FYLL), 393 to 413 (FFAS…AAAL), 418 to 438 (IPLP…SILT), and 465 to 485 (IFGL…MPVV).

This sequence belongs to the SLC13A/DASS transporter (TC 2.A.47) family. DIT1 subfamily.

The protein localises to the cell inner membrane. The catalysed reaction is (2R,3R)-tartrate(out) + succinate(in) = (2R,3R)-tartrate(in) + succinate(out). Catalyzes the uptake of tartrate in exchange for intracellular succinate. Essential for anaerobic L-tartrate fermentation. This chain is L-tartrate/succinate antiporter (ttdT), found in Shigella boydii serotype 4 (strain Sb227).